A 161-amino-acid polypeptide reads, in one-letter code: Cyclic pyranopterin monophosphate synthase (161 aa).

Residues 75-77 and 113-114 contribute to the substrate site; these read LCH and ME. D128 is an active-site residue.

This sequence belongs to the MoaC family. As to quaternary structure, homohexamer; trimer of dimers.

It carries out the reaction (8S)-3',8-cyclo-7,8-dihydroguanosine 5'-triphosphate = cyclic pyranopterin phosphate + diphosphate. Its pathway is cofactor biosynthesis; molybdopterin biosynthesis. Its function is as follows. Catalyzes the conversion of (8S)-3',8-cyclo-7,8-dihydroguanosine 5'-triphosphate to cyclic pyranopterin monophosphate (cPMP). The polypeptide is Cyclic pyranopterin monophosphate synthase (Erwinia tasmaniensis (strain DSM 17950 / CFBP 7177 / CIP 109463 / NCPPB 4357 / Et1/99)).